The chain runs to 177 residues: uncharacterized protein (177 aa).

This is an uncharacterized protein from Homo sapiens (Human).